Reading from the N-terminus, the 326-residue chain is MKIHLNGEPHNAEAGTTLEGLLMGLGFAPEKVAVERNKAVVSRGTYGAVVLQEDDQIEVVHFIGGGQHPPADSWSVAGLTFNSRLLVGTGKYKDFEETKIAIEASGAEIVTVAVRRVNVSNPNAPMLTDYIDPKKYTYLPNTAGCFTAEDAVRTLRLAREAGGWDLVKLEVLSDEKYLWPNNPETLKAAEILVQEGFKVMVYTTDDPHMCKRFEDLGCVAVMPLAAPIGSGLGVRNPYTTRIIVEQAKVPVLVDAGVGTASDAAIAMELGCDGVLMNTAIAGAKDPILMAHAMKHAVLAGRQAYLAGRIQKKLYATASSPLDGTFF.

The active-site Schiff-base intermediate with DXP is the Lys-168. 1-deoxy-D-xylulose 5-phosphate is bound by residues Gly-229, Ala-255–Gly-256, and Asn-277–Thr-278.

It belongs to the ThiG family. In terms of assembly, homotetramer. Forms heterodimers with either ThiH or ThiS.

It is found in the cytoplasm. The enzyme catalyses [ThiS sulfur-carrier protein]-C-terminal-Gly-aminoethanethioate + 2-iminoacetate + 1-deoxy-D-xylulose 5-phosphate = [ThiS sulfur-carrier protein]-C-terminal Gly-Gly + 2-[(2R,5Z)-2-carboxy-4-methylthiazol-5(2H)-ylidene]ethyl phosphate + 2 H2O + H(+). It participates in cofactor biosynthesis; thiamine diphosphate biosynthesis. Its function is as follows. Catalyzes the rearrangement of 1-deoxy-D-xylulose 5-phosphate (DXP) to produce the thiazole phosphate moiety of thiamine. Sulfur is provided by the thiocarboxylate moiety of the carrier protein ThiS. In vitro, sulfur can be provided by H(2)S. The sequence is that of Thiazole synthase from Magnetococcus marinus (strain ATCC BAA-1437 / JCM 17883 / MC-1).